The chain runs to 150 residues: Probable histone H2A.5 (150 aa).

Over residues 1–12 (MESSQATTKPTR) the composition is skewed to low complexity. Disordered stretches follow at residues 1–28 (MESSQATTKPTRGAGGRKGGDRKKSVSK) and 130–150 (KSTASSSQAEKASATKSPKKA). Over residues 131–150 (STASSSQAEKASATKSPKKA) the composition is skewed to polar residues. Position 146 is a phosphoserine (serine 146). The short motif at 146 to 149 (SPKK) is the SPKK motif element.

This sequence belongs to the histone H2A family. As to quaternary structure, the nucleosome is a histone octamer containing two molecules each of H2A, H2B, H3 and H4 assembled in one H3-H4 heterotetramer and two H2A-H2B heterodimers. The octamer wraps approximately 147 bp of DNA. In terms of processing, not ubiquitinated.

The protein localises to the nucleus. It is found in the chromosome. Functionally, core component of nucleosome. Nucleosomes wrap and compact DNA into chromatin, limiting DNA accessibility to the cellular machineries which require DNA as a template. Histones thereby play a central role in transcription regulation, DNA repair, DNA replication and chromosomal stability. DNA accessibility is regulated via a complex set of post-translational modifications of histones, also called histone code, and nucleosome remodeling. This chain is Probable histone H2A.5, found in Arabidopsis thaliana (Mouse-ear cress).